Reading from the N-terminus, the 315-residue chain is Homoserine kinase (315 aa).

ATP is bound at residue 97–107; sequence PPARGLGSSAT.

The protein belongs to the GHMP kinase family. Homoserine kinase subfamily.

It is found in the cytoplasm. The catalysed reaction is L-homoserine + ATP = O-phospho-L-homoserine + ADP + H(+). It functions in the pathway amino-acid biosynthesis; L-threonine biosynthesis; L-threonine from L-aspartate: step 4/5. In terms of biological role, catalyzes the ATP-dependent phosphorylation of L-homoserine to L-homoserine phosphate. The chain is Homoserine kinase from Synechococcus sp. (strain CC9902).